We begin with the raw amino-acid sequence, 343 residues long: Arginine N-succinyltransferase (343 aa).

Leucine 125 contacts succinyl-CoA. The Proton donor role is filled by histidine 229.

It belongs to the arginine N-succinyltransferase family.

It carries out the reaction succinyl-CoA + L-arginine = N(2)-succinyl-L-arginine + CoA + H(+). It participates in amino-acid degradation; L-arginine degradation via AST pathway; L-glutamate and succinate from L-arginine: step 1/5. In terms of biological role, catalyzes the transfer of succinyl-CoA to arginine to produce N(2)-succinylarginine. This chain is Arginine N-succinyltransferase, found in Photorhabdus laumondii subsp. laumondii (strain DSM 15139 / CIP 105565 / TT01) (Photorhabdus luminescens subsp. laumondii).